Here is a 428-residue protein sequence, read N- to C-terminus: Probable anion transporter 6 (428 aa).

The N-terminal stretch at 1–22 (MKFPKRYAIVLLTFMCTNVCYI) is a signal peptide. A run of 11 helical transmembrane segments spans residues 47–67 (MILS…GWAA), 74–94 (LVLL…PLDP), 98–118 (ILLV…FPSI), 137–157 (LTTS…PSLV), 164–184 (SVFS…FKFA), 221–241 (ILFS…HYAL), 269–289 (LPYL…DHLI), 301–321 (KLLN…LPLF), 327–347 (AIFC…GFAV), 356–376 (FAGI…IVGV), and 401–421 (TVFF…LIFS).

The protein belongs to the major facilitator superfamily. Sodium/anion cotransporter (TC 2.A.1.14) family.

The protein resides in the cell membrane. Probable anion transporter. The sequence is that of Probable anion transporter 6 (PHT4;6) from Oryza sativa subsp. japonica (Rice).